Here is a 353-residue protein sequence, read N- to C-terminus: MAASAALFSRLRSGLRVGARGLCTRLAPPPPRTPEQVTEIANRGGSKAQGPQHQPGSEGPSYAKKIALWIAGLLGAGGTVSIVYIFGNNPVDENGTKIPDEFDSDPILVQQLRRTYKYFKDYRQMIIEPTSPCLLPDPLREPYYQPPYTLVLELTGVLLHPEWSLATGWRFKKRPGIETLFQQLAPLYEIVIFTSETGMTAFPLIDSVDPHGFISYRLFRDATRYMEGHHVKDISCLNRDPARVVVVDCKKEAFRLQPFNGVALRPWDGNSDDRVLLDLSAFLKTIALNQVEDVRTVLEHYALEDDPLEAFKQRQSRLEQEEQQRLAELSKSNRQGLSFGSLASRLWPRSKQP.

The transit peptide at 1 to 21 directs the protein to the mitochondrion; that stretch reads MAASAALFSRLRSGLRVGARG. Topologically, residues 22-65 are mitochondrial matrix; sequence LCTRLAPPPPRTPEQVTEIANRGGSKAQGPQHQPGSEGPSYAKK. The disordered stretch occupies residues 24–59; that stretch reads TRLAPPPPRTPEQVTEIANRGGSKAQGPQHQPGSEG. Residues 66–86 traverse the membrane as a helical segment; sequence IALWIAGLLGAGGTVSIVYIF. Residues 87-353 are Mitochondrial intermembrane-facing; that stretch reads GNNPVDENGT…SRLWPRSKQP (267 aa). Residues 143–286 form the FCP1 homology domain; sequence YYQPPYTLVL…LDLSAFLKTI (144 aa). Ser-341 carries the phosphoserine modification.

The protein belongs to the TIM50 family. Component of the TIM23 complex at least composed of TIMM23, TIMM17 (TIMM17A or TIMM17B) and TIMM50; within this complex, directly interacts with TIMM23. The complex interacts with the TIMM44 component of the PAM complex and with DNAJC15.

The protein resides in the mitochondrion inner membrane. In terms of biological role, essential component of the TIM23 complex, a complex that mediates the translocation of transit peptide-containing proteins across the mitochondrial inner membrane. Has some phosphatase activity in vitro; however such activity may not be relevant in vivo. This chain is Mitochondrial import inner membrane translocase subunit TIM50 (Timm50), found in Mus musculus (Mouse).